A 161-amino-acid chain; its full sequence is Putative pre-16S rRNA nuclease (161 aa).

This sequence belongs to the YqgF nuclease family.

The protein resides in the cytoplasm. In terms of biological role, could be a nuclease involved in processing of the 5'-end of pre-16S rRNA. This Bradyrhizobium sp. (strain BTAi1 / ATCC BAA-1182) protein is Putative pre-16S rRNA nuclease.